The primary structure comprises 300 residues: MNDKLSYYKQQVGSFLRQQPGWWMQYINRCIDDQITVNAGYLAYVTLLSLVPLIAVGVAIFSAFPGFESTRLAIESFLFTNFVPTSSDVIKEHISSFAGNANQMTAVGIGFLAAIALLLIRNVDATLNRIWRIKKKRPMMISFAVYWMVLSLGPVFLGGSIAVTSYIVSLVSFADQGIPGFSGFLLKLLPYGISMVGFIMLYTLVPNTRVSFKAAIPGALFAAMLFELTKKGFALYISHFPSYEVIYGAVATIPILFVWIYLSWIVVLLGAELTACISPENIEDTPEIELDEQENTKDTL.

Helical transmembrane passes span 47-67 (LLSL…FPGF), 100-120 (NANQ…LLLI), 143-163 (FAVY…SIAV), 181-201 (FSGF…FIML), 215-235 (AIPG…GFAL), and 249-269 (AVAT…VVLL).

This sequence belongs to the UPF0761 family.

It localises to the cell inner membrane. This chain is UPF0761 membrane protein PSHAa0171, found in Pseudoalteromonas translucida (strain TAC 125).